Reading from the N-terminus, the 506-residue chain is Maturase K (506 aa).

Belongs to the intron maturase 2 family. MatK subfamily.

It localises to the plastid. The protein localises to the chloroplast. Functionally, usually encoded in the trnK tRNA gene intron. Probably assists in splicing its own and other chloroplast group II introns. This is Maturase K from Phyllodoce empetriformis (Pink mountainheath).